The following is a 459-amino-acid chain: Alcohol acyl transferase 1 allele RGc (459 aa).

Catalysis depends on proton acceptor residues H164 and N385.

This sequence belongs to the plant acyltransferase family. As to expression, expressed at very low levels in the skin of ripe fruit.

Functionally, involved in the biosynthesis of volatile esters which confer ripe apple fruit flavor. Alcohol acyl transferase that can use a wide range of alcohols as substrate to produce esters. In Malus domestica (Apple), this protein is Alcohol acyl transferase 1 allele RGc.